The primary structure comprises 332 residues: 2,3-diketo-L-gulonate reductase (332 aa).

Histidine 44 (proton donor) is an active-site residue. NAD(+) contacts are provided by residues 168 to 174 (ITMVDMS), 224 to 225 (WK), and 304 to 306 (GHE).

Belongs to the LDH2/MDH2 oxidoreductase family. DlgD subfamily. Homodimer.

It localises to the cytoplasm. The enzyme catalyses 3-dehydro-L-gulonate + NAD(+) = 2,3-dioxo-L-gulonate + NADH + H(+). The catalysed reaction is 3-dehydro-L-gulonate + NADP(+) = 2,3-dioxo-L-gulonate + NADPH + H(+). Catalyzes the reduction of 2,3-diketo-L-gulonate in the presence of NADH, to form 3-keto-L-gulonate. This Klebsiella pneumoniae (strain 342) protein is 2,3-diketo-L-gulonate reductase.